We begin with the raw amino-acid sequence, 379 residues long: Cytochrome b (379 aa).

4 helical membrane-spanning segments follow: residues F33–M53, W77–V98, W113–L133, and F178–L198. Positions 83 and 97 each coordinate heme b. Heme b-binding residues include H182 and H196. Position 201 (H201) interacts with a ubiquinone. 4 helical membrane-spanning segments follow: residues I226–F246, L288–N308, I320–G340, and F347–P367.

This sequence belongs to the cytochrome b family. As to quaternary structure, the cytochrome bc1 complex contains 11 subunits: 3 respiratory subunits (MT-CYB, CYC1 and UQCRFS1), 2 core proteins (UQCRC1 and UQCRC2) and 6 low-molecular weight proteins (UQCRH/QCR6, UQCRB/QCR7, UQCRQ/QCR8, UQCR10/QCR9, UQCR11/QCR10 and a cleavage product of UQCRFS1). This cytochrome bc1 complex then forms a dimer. Requires heme b as cofactor.

It localises to the mitochondrion inner membrane. Its function is as follows. Component of the ubiquinol-cytochrome c reductase complex (complex III or cytochrome b-c1 complex) that is part of the mitochondrial respiratory chain. The b-c1 complex mediates electron transfer from ubiquinol to cytochrome c. Contributes to the generation of a proton gradient across the mitochondrial membrane that is then used for ATP synthesis. The protein is Cytochrome b (MT-CYB) of Akodon dayi (Day's grass mouse).